Here is a 328-residue protein sequence, read N- to C-terminus: NAD(P)H-dependent pentose reductase (328 aa).

Tyr-50 functions as the Proton donor in the catalytic mechanism. His-112 contacts substrate. NAD(+) is bound by residues 174-175 (AN), 223-232 (SSFGPQSFVE), and 279-289 (KSNNVDRLKQN).

The protein belongs to the aldo/keto reductase family.

Functionally, pentose reductase with a broad substrate affinity involved in pentose catabolism. Has highest reductase activities with L-arabinose and D-xylose as substrates, and displays much lower activities with D-ribose, D-galactose and D-glucose. Has highest dehydrogenase activity with L-arabitol as substrate, followed by xylitol and D-sorbitol. May be responsible for the first step of the L-arabinose catabolic pathway. The protein is NAD(P)H-dependent pentose reductase (PRD1) of Pyricularia oryzae (strain 70-15 / ATCC MYA-4617 / FGSC 8958) (Rice blast fungus).